Reading from the N-terminus, the 107-residue chain is uncharacterized protein (107 aa).

2 disordered regions span residues 51–75 (VQRS…TQSA) and 88–107 (NPTP…APEP). Over residues 63–75 (NGNQGSAIPTQSA) the composition is skewed to polar residues.

This is an uncharacterized protein from Fowl adenovirus A serotype 1 (strain CELO / Phelps) (FAdV-1).